A 698-amino-acid polypeptide reads, in one-letter code: Cytochrome c oxidase subunit 1 (698 aa).

The helical transmembrane segment at 65–85 (INYLYFSMVTGLSGAALATMI) threads the bilayer. Position 88 (Glu88) interacts with Ca(2+). His111 provides a ligand contact to Fe(II)-heme a. The next 8 membrane-spanning stretches (helical) occupy residues 113 to 133 (LIMV…NFLI), 147 to 167 (LNSI…KIGF), 304 to 324 (ILIL…TNLL), 349 to 369 (IFLT…AVIM), 395 to 415 (LFWF…FGFI), 434 to 454 (IWAI…HMYL), 468 to 488 (ITIM…LSLV), and 498 to 518 (FLFS…GMWL). Cu cation is bound at residue His401. A cross-link (1'-histidyl-3'-tyrosine (His-Tyr)) is located at residues 401–405 (HPEVY). Residue Tyr405 participates in O2 binding. Cu cation is bound by residues His450 and His451. Residues His528 and Asp529 each coordinate Mg(2+). Helical transmembrane passes span 533–553 (VVAH…FSGF), 574–594 (LIYY…LGFS), and 613–633 (MSTA…LMIF). His536 contacts heme a3. His538 is a Fe(II)-heme a binding site.

Belongs to the heme-copper respiratory oxidase family. Component of the cytochrome c oxidase (complex IV, CIV), a multisubunit enzyme composed of a catalytic core of 3 subunits and several supernumerary subunits. The complex exists as a monomer or a dimer and forms supercomplexes (SCs) in the inner mitochondrial membrane with ubiquinol-cytochrome c oxidoreductase (cytochrome b-c1 complex, complex III, CIII). It depends on heme as a cofactor. Cu cation serves as cofactor.

It is found in the mitochondrion inner membrane. The enzyme catalyses 4 Fe(II)-[cytochrome c] + O2 + 8 H(+)(in) = 4 Fe(III)-[cytochrome c] + 2 H2O + 4 H(+)(out). It functions in the pathway energy metabolism; oxidative phosphorylation. In terms of biological role, component of the cytochrome c oxidase, the last enzyme in the mitochondrial electron transport chain which drives oxidative phosphorylation. The respiratory chain contains 3 multisubunit complexes succinate dehydrogenase (complex II, CII), ubiquinol-cytochrome c oxidoreductase (cytochrome b-c1 complex, complex III, CIII) and cytochrome c oxidase (complex IV, CIV), that cooperate to transfer electrons derived from NADH and succinate to molecular oxygen, creating an electrochemical gradient over the inner membrane that drives transmembrane transport and the ATP synthase. Cytochrome c oxidase is the component of the respiratory chain that catalyzes the reduction of oxygen to water. Electrons originating from reduced cytochrome c in the intermembrane space (IMS) are transferred via the dinuclear copper A center (CU(A)) of subunit 2 and heme A of subunit 1 to the active site in subunit 1, a binuclear center (BNC) formed by heme A3 and copper B (CU(B)). The BNC reduces molecular oxygen to 2 water molecules using 4 electrons from cytochrome c in the IMS and 4 protons from the mitochondrial matrix. This Tetrahymena pyriformis protein is Cytochrome c oxidase subunit 1 (COI).